A 211-amino-acid polypeptide reads, in one-letter code: ATP-dependent Clp protease proteolytic subunit (211 aa).

The active-site Nucleophile is the Ser-114. Residue His-139 is part of the active site.

It belongs to the peptidase S14 family. As to quaternary structure, fourteen ClpP subunits assemble into 2 heptameric rings which stack back to back to give a disk-like structure with a central cavity, resembling the structure of eukaryotic proteasomes.

The protein resides in the cytoplasm. It carries out the reaction Hydrolysis of proteins to small peptides in the presence of ATP and magnesium. alpha-casein is the usual test substrate. In the absence of ATP, only oligopeptides shorter than five residues are hydrolyzed (such as succinyl-Leu-Tyr-|-NHMec, and Leu-Tyr-Leu-|-Tyr-Trp, in which cleavage of the -Tyr-|-Leu- and -Tyr-|-Trp bonds also occurs).. In terms of biological role, cleaves peptides in various proteins in a process that requires ATP hydrolysis. Has a chymotrypsin-like activity. Plays a major role in the degradation of misfolded proteins. The sequence is that of ATP-dependent Clp protease proteolytic subunit from Pseudomonas fluorescens (strain Pf0-1).